The following is a 362-amino-acid chain: Aspartate-semialdehyde dehydrogenase (362 aa).

Residues Thr15, Gly16, Ala17, Val18, Ser40, Ser43, Leu87, and Asp88 each coordinate NADP(+). Cys154 (acyl-thioester intermediate) is an active-site residue. An NADP(+)-binding site is contributed by Gly186. The active-site Proton acceptor is the His251. Asn340 contributes to the NADP(+) binding site.

This sequence belongs to the aspartate-semialdehyde dehydrogenase family. As to quaternary structure, homotetramer; dimer of dimers.

The protein resides in the cytoplasm. The protein localises to the cytosol. Its subcellular location is the nucleus. It catalyses the reaction L-aspartate 4-semialdehyde + phosphate + NADP(+) = 4-phospho-L-aspartate + NADPH + H(+). Its pathway is amino-acid biosynthesis; L-methionine biosynthesis via de novo pathway; L-homoserine from L-aspartate: step 2/3. The protein operates within amino-acid biosynthesis; L-threonine biosynthesis; L-threonine from L-aspartate: step 2/5. Its function is as follows. Catalyzes the NADPH-dependent formation of L-aspartate 4-semialdehyde (L-ASA) by the reductive dephosphorylation of 4-phospho-L-aspartate. Mediates the second step in the biosynthesis of amino acids that derive from aspartate (the aspartate family of amino acids), including methioinine and threonine, the latter of which is a precursor to isoleucine. The chain is Aspartate-semialdehyde dehydrogenase from Trichophyton rubrum (strain ATCC MYA-4607 / CBS 118892) (Athlete's foot fungus).